Reading from the N-terminus, the 287-residue chain is Acetylglutamate kinase (287 aa).

Residues 65 to 66 (GG), arginine 87, and asparagine 181 contribute to the substrate site.

It belongs to the acetylglutamate kinase family. ArgB subfamily.

Its subcellular location is the cytoplasm. It catalyses the reaction N-acetyl-L-glutamate + ATP = N-acetyl-L-glutamyl 5-phosphate + ADP. Its pathway is amino-acid biosynthesis; L-arginine biosynthesis; N(2)-acetyl-L-ornithine from L-glutamate: step 2/4. Catalyzes the ATP-dependent phosphorylation of N-acetyl-L-glutamate. This is Acetylglutamate kinase from Syntrophomonas wolfei subsp. wolfei (strain DSM 2245B / Goettingen).